The primary structure comprises 479 residues: Cysteine protease effector 1 (479 aa).

The protein is Cysteine protease effector 1 of Escherichia coli O1:K1:H7 (strain ATCC 11775 / DSM 30083 / JCM 1649 / NBRC 102203 / NCTC 9001 / U5/41).